Reading from the N-terminus, the 157-residue chain is Transcriptional repressor NrdR (157 aa).

A disordered region spans residues 1 to 24 (MRCPKCGGNKSSVVDSRQAEDGNT). The segment at 3–34 (CPKCGGNKSSVVDSRQAEDGNTIRRRRECEEC) is a zinc-finger region. An ATP-cone domain is found at 49-139 (LVVVKKDGTR…VYRSFKDVGE (91 aa)).

The protein belongs to the NrdR family. Zn(2+) serves as cofactor.

Functionally, negatively regulates transcription of bacterial ribonucleotide reductase nrd genes and operons by binding to NrdR-boxes. The polypeptide is Transcriptional repressor NrdR (Streptococcus sanguinis (strain SK36)).